Reading from the N-terminus, the 124-residue chain is Fluoride-specific ion channel FluC (124 aa).

4 consecutive transmembrane segments (helical) span residues 2–22 (LNIAIAVFIGGGLGSVLRWLI), 35–55 (TGTLVANCIGAFIIAFGIAWF), 71–91 (TGFCGGLTTFSTFSVEVVALF), and 100–120 (LGTMGANLAGSFLMTAFAFWL). G75 and T78 together coordinate Na(+).

This sequence belongs to the fluoride channel Fluc/FEX (TC 1.A.43) family.

It localises to the cell inner membrane. It catalyses the reaction fluoride(in) = fluoride(out). Its activity is regulated as follows. Na(+) is not transported, but it plays an essential structural role and its presence is essential for fluoride channel function. In terms of biological role, fluoride-specific ion channel. Important for reducing fluoride concentration in the cell, thus reducing its toxicity. This chain is Fluoride-specific ion channel FluC, found in Proteus mirabilis (strain HI4320).